The sequence spans 373 residues: MAVPVVEPERYEAQLDAKRERVTAQFARFSPPALEVFPSPPSHYRQRCEFRLWHEGDDLFYAMFEVDPSDPKRKEVIRLDDYPVASERINALMPALREALLASDVLRRKLFQVEFLTTLSGEALVTLIYHRQLDAAWEQEARALQTTLGVSIIGRARKQRLVLDRDHVWERLQVEGREFVYQQVENSFTQPNAAICQSMLGWARDVTRESREGDLVEFYCGNGNFTVALAENFRRVVATEISRTSVASANVNLEANAVANAVVARMSAEEFSAALAGEKTGRRVAALALDEHTFTTALVDPPRAGLDAHSCEQLKVYERIVYISCNPDTLEANLEQLSATHVVTRFALFDQFPYTDHCECGVLLERRAPAARA.

Residues Q190, Y219, N224, E240, and D300 each contribute to the S-adenosyl-L-methionine site. C325 acts as the Nucleophile in catalysis. E359 (proton acceptor) is an active-site residue.

This sequence belongs to the class I-like SAM-binding methyltransferase superfamily. RNA M5U methyltransferase family. TrmA subfamily.

It carries out the reaction uridine(54) in tRNA + S-adenosyl-L-methionine = 5-methyluridine(54) in tRNA + S-adenosyl-L-homocysteine + H(+). The enzyme catalyses uridine(341) in tmRNA + S-adenosyl-L-methionine = 5-methyluridine(341) in tmRNA + S-adenosyl-L-homocysteine + H(+). In terms of biological role, dual-specificity methyltransferase that catalyzes the formation of 5-methyluridine at position 54 (m5U54) in all tRNAs, and that of position 341 (m5U341) in tmRNA (transfer-mRNA). The polypeptide is tRNA/tmRNA (uracil-C(5))-methyltransferase (Chromohalobacter salexigens (strain ATCC BAA-138 / DSM 3043 / CIP 106854 / NCIMB 13768 / 1H11)).